The primary structure comprises 119 residues: MPRVKRGVTARARHQKIFALAKGYRGRRKNVYRVAKQAVMKAGQYAYRDRRQRKRQFRQLWIVRINAGARENGLSYSKFMNGLKRASIEIDRKVLADLAVFDKAAFAQLVEKAKAALAA.

This sequence belongs to the bacterial ribosomal protein bL20 family.

Binds directly to 23S ribosomal RNA and is necessary for the in vitro assembly process of the 50S ribosomal subunit. It is not involved in the protein synthesizing functions of that subunit. The polypeptide is Large ribosomal subunit protein bL20 (Neisseria gonorrhoeae (strain ATCC 700825 / FA 1090)).